The sequence spans 256 residues: Ras-related protein Rab-26 (256 aa).

Residues 1–53 (MSRKKTPKSKAGSAPATSALPAANGPRPVRPGTARPGPEAPPNGPPQPGRSSV) are disordered. The segment covering 38 to 48 (PEAPPNGPPQP) has biased composition (pro residues). Residues Ser72, Gly73, Val74, Gly75, Lys76, Thr77, Cys78, Ser95, and Thr96 each contribute to the GTP site. Position 77 (Thr77) interacts with Mg(2+). Short sequence motifs (switch) lie at residues 86 to 101 (GAFL…GIDF) and 119 to 136 (DTAG…YYRD). 2 residues coordinate Mg(2+): Thr96 and Asp119. Positions 122, 177, 178, 180, 208, and 209 each coordinate GTP. S-geranylgeranyl cysteine attachment occurs at residues Cys253 and Cys254.

It belongs to the small GTPase superfamily. Rab family. Requires Mg(2+) as cofactor.

Its subcellular location is the cell membrane. The catalysed reaction is GTP + H2O = GDP + phosphate + H(+). With respect to regulation, regulated by guanine nucleotide exchange factors (GEFs) which promote the exchange of bound GDP for free GTP. Regulated by GTPase activating proteins (GAPs) which increase the GTP hydrolysis activity. Inhibited by GDP dissociation inhibitors (GDIs). In terms of biological role, the small GTPases Rab are key regulators of intracellular membrane trafficking, from the formation of transport vesicles to their fusion with membranes. Rabs cycle between an inactive GDP-bound form and an active GTP-bound form that is able to recruit to membranes different set of downstream effectors directly responsible for vesicle formation, movement, tethering and fusion. RAB26 mediates transport of ADRA2A and ADRA2B from the Golgi to the cell membrane. Plays a role in the maturation of zymogenic granules and in pepsinogen secretion in the stomach. Plays a role in the secretion of amylase from acinar granules in the parotid gland. The protein is Ras-related protein Rab-26 (RAB26) of Bos taurus (Bovine).